The primary structure comprises 126 residues: Small ribosomal subunit protein uS13 (126 aa).

Residues 91–126 are disordered; it reads RHRRGLPVRGQRTSTNARTRKGPRRAIAGKKKPGKK. Over residues 108 to 126 the composition is skewed to basic residues; that stretch reads RTRKGPRRAIAGKKKPGKK.

The protein belongs to the universal ribosomal protein uS13 family. As to quaternary structure, part of the 30S ribosomal subunit. Forms a loose heterodimer with protein S19. Forms two bridges to the 50S subunit in the 70S ribosome.

Its function is as follows. Located at the top of the head of the 30S subunit, it contacts several helices of the 16S rRNA. In the 70S ribosome it contacts the 23S rRNA (bridge B1a) and protein L5 of the 50S subunit (bridge B1b), connecting the 2 subunits; these bridges are implicated in subunit movement. Contacts the tRNAs in the A and P-sites. In Streptomyces coelicolor (strain ATCC BAA-471 / A3(2) / M145), this protein is Small ribosomal subunit protein uS13.